A 278-amino-acid chain; its full sequence is Large ribosomal subunit protein uL2 (278 aa).

2 disordered regions span residues 29 to 53 and 221 to 278; these read PVKS…TSRG and RGVA…KKKR. Residues 269 to 278 are compositionally biased toward basic residues; sequence IRSRHAKKKR.

This sequence belongs to the universal ribosomal protein uL2 family. In terms of assembly, part of the 50S ribosomal subunit. Forms a bridge to the 30S subunit in the 70S ribosome.

Its function is as follows. One of the primary rRNA binding proteins. Required for association of the 30S and 50S subunits to form the 70S ribosome, for tRNA binding and peptide bond formation. It has been suggested to have peptidyltransferase activity; this is somewhat controversial. Makes several contacts with the 16S rRNA in the 70S ribosome. This Erythrobacter litoralis (strain HTCC2594) protein is Large ribosomal subunit protein uL2.